Reading from the N-terminus, the 465-residue chain is Cysteine--tRNA ligase (465 aa).

Residue Cys30 coordinates Zn(2+). Residues 32–42 (ITVYDYCHIGH) carry the 'HIGH' region motif. 3 residues coordinate Zn(2+): Cys214, His239, and Glu243. The 'KMSKS' region motif lies at 271–275 (KMSKS). Lys274 is a binding site for ATP.

It belongs to the class-I aminoacyl-tRNA synthetase family. In terms of assembly, monomer. Zn(2+) is required as a cofactor.

It localises to the cytoplasm. It carries out the reaction tRNA(Cys) + L-cysteine + ATP = L-cysteinyl-tRNA(Cys) + AMP + diphosphate. The polypeptide is Cysteine--tRNA ligase (Burkholderia thailandensis (strain ATCC 700388 / DSM 13276 / CCUG 48851 / CIP 106301 / E264)).